A 73-amino-acid chain; its full sequence is MNLGLAIFLIIIALLIGLVGGFYGARAYMKKYFQDNPPISEDMIAAMMAQMGQKPSTKKLNQVMNMMKHQQQK.

The helical transmembrane segment at 3 to 23 (LGLAIFLIIIALLIGLVGGFY) threads the bilayer.

This sequence belongs to the UPF0154 family.

It localises to the cell membrane. The polypeptide is UPF0154 protein LGAS_0795 (Lactobacillus gasseri (strain ATCC 33323 / DSM 20243 / BCRC 14619 / CIP 102991 / JCM 1131 / KCTC 3163 / NCIMB 11718 / NCTC 13722 / AM63)).